The chain runs to 104 residues: Large ribosomal subunit protein bL21 (104 aa).

Belongs to the bacterial ribosomal protein bL21 family. Part of the 50S ribosomal subunit. Contacts protein L20.

This protein binds to 23S rRNA in the presence of protein L20. The protein is Large ribosomal subunit protein bL21 of Streptococcus pyogenes serotype M1.